Reading from the N-terminus, the 360-residue chain is Carbamoyl phosphate synthase small chain (360 aa).

The tract at residues 1-169 (MTKRLLILED…TKTAYPAPGI (169 aa)) is CPSase. S46, G220, and G222 together coordinate L-glutamine. The Glutamine amidotransferase type-1 domain occupies 172 to 358 (NIVLVDFGLK…LEMIDSWRCT (187 aa)). Residue C247 is the Nucleophile of the active site. Residues M248, Q251, N289, G291, and Y292 each coordinate L-glutamine. Catalysis depends on residues H331 and D333.

It belongs to the CarA family. Composed of two chains; the small (or glutamine) chain promotes the hydrolysis of glutamine to ammonia, which is used by the large (or ammonia) chain to synthesize carbamoyl phosphate. Tetramer of heterodimers (alpha,beta)4.

It carries out the reaction hydrogencarbonate + L-glutamine + 2 ATP + H2O = carbamoyl phosphate + L-glutamate + 2 ADP + phosphate + 2 H(+). The catalysed reaction is L-glutamine + H2O = L-glutamate + NH4(+). Its pathway is amino-acid biosynthesis; L-arginine biosynthesis; carbamoyl phosphate from bicarbonate: step 1/1. It participates in pyrimidine metabolism; UMP biosynthesis via de novo pathway; (S)-dihydroorotate from bicarbonate: step 1/3. Its function is as follows. Small subunit of the glutamine-dependent carbamoyl phosphate synthetase (CPSase). CPSase catalyzes the formation of carbamoyl phosphate from the ammonia moiety of glutamine, carbonate, and phosphate donated by ATP, constituting the first step of 2 biosynthetic pathways, one leading to arginine and/or urea and the other to pyrimidine nucleotides. The small subunit (glutamine amidotransferase) binds and cleaves glutamine to supply the large subunit with the substrate ammonia. The protein is Carbamoyl phosphate synthase small chain of Streptococcus pyogenes serotype M3 (strain SSI-1).